We begin with the raw amino-acid sequence, 239 residues long: MGQKINPLGFRLGTTQKHHSFWFAQPKNYSEGLQEDKKIRDCIKNYIQKNRKKGSNRKIESDSSSEVITHNRKMDSGSSSEVITHIEIQKEIDTIHVIIHIGFPNLLKKKGAIEELEKDLQKEINSVNQRFNISIEKVKEPYRQPNILAEYIAFQLKNRVSFRKAMKKAIELTKKADIRGVKVKIAGRLGGKEIARAESIKRGRLPLQTIRAKIDYCCYPIRTIYGVLGVKIWIFVDEE.

A KH type-2 domain is found at 43–139 (IKNYIQKNRK…RFNISIEKVK (97 aa)). Residues 50–74 (NRKKGSNRKIESDSSSEVITHNRKM) are disordered.

The protein belongs to the universal ribosomal protein uS3 family. As to quaternary structure, part of the 30S ribosomal subunit.

The protein localises to the plastid. It is found in the chloroplast. The protein is Small ribosomal subunit protein uS3c (rps3) of Hordeum vulgare (Barley).